The chain runs to 871 residues: Zinc finger and BTB domain-containing protein 10 (871 aa).

Disordered regions lie at residues 1 to 156 (MSFS…FNGR) and 177 to 228 (GASL…AGEG). Residues 14–26 (RGGGLVTASGGGS) show a composition bias toward gly residues. Positions 27–37 (TNNNAGGEASA) are enriched in low complexity. Residues 39–56 (PPQPQPRQPPPPAPPALQ) are compositionally biased toward pro residues. The span at 65-76 (EEVELEGLEPQD) shows a compositional bias: acidic residues. Residues 77-103 (LEASAGPAAGAAEEAKELLLPQDAGGP) are compositionally biased toward low complexity. Arginine 126 is modified (omega-N-methylarginine). Residues 126-135 (RGGGGGGLGN) are compositionally biased toward gly residues. Position 210 is a phosphoserine (serine 210). Residue lysine 245 forms a Glycyl lysine isopeptide (Lys-Gly) (interchain with G-Cter in SUMO2) linkage. Positions 364 to 433 (CDVSIVVSGK…LYSGNLVLTS (70 aa)) constitute a BTB domain. Residues lysine 468, lysine 483, and lysine 497 each participate in a glycyl lysine isopeptide (Lys-Gly) (interchain with G-Cter in SUMO2) cross-link. Residue serine 565 is modified to Phosphoserine. Residues lysine 573, lysine 672, lysine 684, lysine 696, and lysine 706 each participate in a glycyl lysine isopeptide (Lys-Gly) (interchain with G-Cter in SUMO2) cross-link. 2 consecutive C2H2-type zinc fingers follow at residues 722 to 744 (LKCPHCSYVAKYRRTLKRHLLIH) and 750 to 772 (FSCDICGKLFTRREHVKRHSLVH). The segment at 812-871 (SQPGGQEGVDQGQDTEFPRDEEYEENEVGEADEELVDDGEDQNDPSRWDESGEVCMSLDD) is disordered. The segment covering 830–854 (RDEEYEENEVGEADEELVDDGEDQN) has biased composition (acidic residues).

The protein resides in the nucleus. Its function is as follows. May be involved in transcriptional regulation. The protein is Zinc finger and BTB domain-containing protein 10 (ZBTB10) of Homo sapiens (Human).